Reading from the N-terminus, the 639-residue chain is E3 ubiquitin-protein ligase RNF12 (639 aa).

Disordered stretches follow at residues 1–28 (MESA…RLDR), 67–403 (RLQQ…ESER), and 467–534 (NDTD…GGVT). A compositionally biased stretch (low complexity) spans 11 to 21 (STEQSESQRQS). Polar residues-rich tracts occupy residues 110-138 (SVRQ…NPNS) and 147-166 (INVN…QSSE). A compositionally biased stretch (basic and acidic residues) spans 213-228 (RSPDQRRTRARTDRSR). The span at 244–253 (HSSSQTVDAS) shows a compositional bias: polar residues. Positions 269–286 (SSQMQNSSSSNETEGSSR) are enriched in low complexity. Residues 290–302 (HITARQQALGTEG) show a composition bias toward polar residues. Composition is skewed to low complexity over residues 303 to 327 (QSQS…SQST) and 335 to 348 (SRSS…DSSS). The segment covering 349 to 358 (NAETTGTGQR) has biased composition (polar residues). Residues 372–382 (RPGDYRQRDSI) are compositionally biased toward basic and acidic residues. Residues 383-399 (ANRTRSRSQTPNNTVTY) show a composition bias toward polar residues. Pro residues-rich tracts occupy residues 473-482 (NPTPVSPPAA) and 493-506 (PEPP…PEPV). The RING-type; atypical zinc-finger motif lies at 585–626 (CSVCITEYTEGNKLRKLPCSHEYHVHCIDRWLSENSTCPICR). The PDZ-binding motif lies at 636 to 639 (ESIV).

It belongs to the RNF12 family. In terms of assembly, forms homodimers through the C-terminal region. The N-terminus interacts with the homeobox of LIM/homeobox factor lhx1/lim1, with lhx3/lim3 and lhx5/lim5, and with the N-terminus of ldb1.

The protein localises to the nucleus. The enzyme catalyses S-ubiquitinyl-[E2 ubiquitin-conjugating enzyme]-L-cysteine + [acceptor protein]-L-lysine = [E2 ubiquitin-conjugating enzyme]-L-cysteine + N(6)-ubiquitinyl-[acceptor protein]-L-lysine.. Its pathway is protein modification; protein ubiquitination. In terms of biological role, acts as an E3 ubiquitin-protein ligase specific for ldb1, mediating ubiquitination and proteasome-dependent degradation of excess ldb1 in a RING-dependent manner. Does not degrade ldb1 bound to lhx1/lim1, nor lim1 itself and thus contributes to the establishment of proper ldb1-lhx1/lim1 stoichiometry and the formation of a ldb1-lhx1/lim1 complex. Interferes with Spemann organizer function and suppresses secondary axis formation induced by ldb1 and lhx1/lim1. This is E3 ubiquitin-protein ligase RNF12 from Xenopus tropicalis (Western clawed frog).